A 433-amino-acid polypeptide reads, in one-letter code: Monodehydroascorbate reductase (433 aa).

FAD-binding positions include 12–15 (GGVS), E39, R46, K51, I94, and 145–146 (RE). Residues 170–176 (GGYIGLE), E194, R200, and G259 each bind NAD(+). An NADP(+)-binding site is contributed by 172–176 (YIGLE). The NADP(+) site is built by R200 and G259. D296 is a binding site for FAD. NAD(+) is bound at residue 312–313 (EH). 312-313 (EH) is a binding site for NADP(+). Residue V314 coordinates FAD. Position 318 (R318) interacts with L-ascorbate. FAD is bound at residue Y347. Position 347 (Y347) interacts with NAD(+). Residue Y347 participates in NADP(+) binding. Position 349 (R349) interacts with L-ascorbate.

It belongs to the FAD-dependent oxidoreductase family. FAD is required as a cofactor. Expressed at relatively low levels in all tissues examined.

It is found in the cytoplasm. The catalysed reaction is 2 monodehydro-L-ascorbate radical + NADH + H(+) = 2 L-ascorbate + NAD(+). Catalyzes the conversion of monodehydroascorbate to ascorbate, oxidizing NADH in the process. The polypeptide is Monodehydroascorbate reductase (Pisum sativum (Garden pea)).